The following is a 212-amino-acid chain: uncharacterized protein (212 aa).

The interval 47 to 129 is disordered; the sequence is RELLDRRRSQ…GNIDNGQPRR (83 aa).

This is an uncharacterized protein from Caenorhabditis elegans.